Here is a 103-residue protein sequence, read N- to C-terminus: Small ribosomal subunit protein uS10 (103 aa).

This sequence belongs to the universal ribosomal protein uS10 family. In terms of assembly, part of the 30S ribosomal subunit.

Functionally, involved in the binding of tRNA to the ribosomes. The sequence is that of Small ribosomal subunit protein uS10 from Desulfatibacillum aliphaticivorans.